The following is a 183-amino-acid chain: Glutathione-regulated potassium-efflux system ancillary protein KefG (183 aa).

This sequence belongs to the NAD(P)H dehydrogenase (quinone) family. KefG subfamily. As to quaternary structure, interacts with KefB.

The protein resides in the cell inner membrane. It catalyses the reaction a quinone + NADH + H(+) = a quinol + NAD(+). The catalysed reaction is a quinone + NADPH + H(+) = a quinol + NADP(+). Regulatory subunit of a potassium efflux system that confers protection against electrophiles. Required for full activity of KefB. This chain is Glutathione-regulated potassium-efflux system ancillary protein KefG, found in Serratia proteamaculans (strain 568).